Consider the following 199-residue polypeptide: OPA3-like protein (199 aa).

Positions 98–141 (RSSEKDKKKEEALQNRFKNLEEKLEVQQETINNLTNVIEAIQSS) form a coiled coil.

The protein belongs to the OPA3 family.

The sequence is that of OPA3-like protein from Dictyostelium discoideum (Social amoeba).